The sequence spans 482 residues: tRNA sulfurtransferase (482 aa).

The 105-residue stretch at 61 to 165 folds into the THUMP domain; that stretch reads LAIRDALTRI…DDRLLLIKGR (105 aa). ATP is bound by residues 183–184, lysine 265, glycine 287, and glutamine 296; that span reads LI. A disulfide bridge links cysteine 344 with cysteine 456. In terms of domain architecture, Rhodanese spans 404–482; the sequence is FGPNDVILDI…GFNNVKVYRP (79 aa). Residue cysteine 456 is the Cysteine persulfide intermediate of the active site.

Belongs to the ThiI family.

It is found in the cytoplasm. It catalyses the reaction [ThiI sulfur-carrier protein]-S-sulfanyl-L-cysteine + a uridine in tRNA + 2 reduced [2Fe-2S]-[ferredoxin] + ATP + H(+) = [ThiI sulfur-carrier protein]-L-cysteine + a 4-thiouridine in tRNA + 2 oxidized [2Fe-2S]-[ferredoxin] + AMP + diphosphate. It carries out the reaction [ThiS sulfur-carrier protein]-C-terminal Gly-Gly-AMP + S-sulfanyl-L-cysteinyl-[cysteine desulfurase] + AH2 = [ThiS sulfur-carrier protein]-C-terminal-Gly-aminoethanethioate + L-cysteinyl-[cysteine desulfurase] + A + AMP + 2 H(+). The protein operates within cofactor biosynthesis; thiamine diphosphate biosynthesis. Its function is as follows. Catalyzes the ATP-dependent transfer of a sulfur to tRNA to produce 4-thiouridine in position 8 of tRNAs, which functions as a near-UV photosensor. Also catalyzes the transfer of sulfur to the sulfur carrier protein ThiS, forming ThiS-thiocarboxylate. This is a step in the synthesis of thiazole, in the thiamine biosynthesis pathway. The sulfur is donated as persulfide by IscS. The polypeptide is tRNA sulfurtransferase (Escherichia coli O8 (strain IAI1)).